Consider the following 220-residue polypeptide: Claudin-3 (220 aa).

Topologically, residues 1–8 (MSMGLEIT) are cytoplasmic. A helical membrane pass occupies residues 9–29 (GTALAVLGWLGTIVCCALPMW). Topologically, residues 30 to 80 (RVSAFIGSNIITSQNIWEGLWMNCVVQSTGQMQCKVYDSLLALPQDLQAAR) are extracellular. The chain crosses the membrane as a helical span at residues 81-101 (ALIVVAILLAAFGLLVALVGA). At 102–115 (QCTNCVQDDTAKAK) the chain is on the cytoplasmic side. Residues 116–136 (ITIVAGVLFLLAALLTLVPVS) traverse the membrane as a helical segment. The Extracellular segment spans residues 137–159 (WSANTIIRDFYNPVVPEAQKREM). The helical transmembrane segment at 160–180 (GAGLYVGWAAAALQLLGGALL) threads the bilayer. At 181–220 (CCSCPPREKKYTATKVVYSAPRSTGPGASLGTGYDRKDYV) the chain is on the cytoplasmic side. Tyrosine 198 carries the phosphotyrosine modification. Serine 199 and serine 209 each carry phosphoserine. Residues 219–220 (YV) are interactions with TJP1, TJP2 and TJP3.

This sequence belongs to the claudin family. As to quaternary structure, can form homo- and heteropolymers with other CLDN. Homopolymers interact with CLDN1 and CLDN2 homopolymers. Interacts in cis (within the same plasma membrane) with CLDN19. Directly interacts with TJP1/ZO-1, TJP2/ZO-2 and TJP3/ZO-3.

The protein localises to the cell junction. It is found in the tight junction. Its subcellular location is the cell membrane. In terms of biological role, barrier-forming claudin. Plays a major role in tight junction-specific obliteration of the intercellular space, through calcium-independent cell-adhesion activity. The sequence is that of Claudin-3 (CLDN3) from Homo sapiens (Human).